A 358-amino-acid chain; its full sequence is Methylthioribose-1-phosphate isomerase (358 aa).

Residues 54–56, Arg96, and Gln205 each bind substrate; that span reads RGA. The active-site Proton donor is the Asp246. Substrate is bound at residue 256-257; it reads GK.

Belongs to the eIF-2B alpha/beta/delta subunits family. MtnA subfamily.

The enzyme catalyses 5-(methylsulfanyl)-alpha-D-ribose 1-phosphate = 5-(methylsulfanyl)-D-ribulose 1-phosphate. It functions in the pathway amino-acid biosynthesis; L-methionine biosynthesis via salvage pathway; L-methionine from S-methyl-5-thio-alpha-D-ribose 1-phosphate: step 1/6. Catalyzes the interconversion of methylthioribose-1-phosphate (MTR-1-P) into methylthioribulose-1-phosphate (MTRu-1-P). The protein is Methylthioribose-1-phosphate isomerase of Pseudomonas putida (strain ATCC 47054 / DSM 6125 / CFBP 8728 / NCIMB 11950 / KT2440).